The sequence spans 326 residues: Prenyl transferase nodC (326 aa).

Residues 8–28 (LAAVLFSALFSLGVILVHLPW) traverse the membrane as a helical segment. Histidine 95 provides a ligand contact to isopentenyl diphosphate. Mg(2+) is bound by residues aspartate 102 and aspartate 106. Arginine 111 contributes to the dimethylallyl diphosphate binding site. The N-linked (GlcNAc...) asparagine glycan is linked to asparagine 139. Residue lysine 195 coordinates dimethylallyl diphosphate. The N-linked (GlcNAc...) asparagine glycan is linked to asparagine 210.

Belongs to the FPP/GGPP synthase family.

Its subcellular location is the membrane. Its pathway is secondary metabolite biosynthesis. In terms of biological role, cytochrome P450 monooxygenase; part of the gene cluster that mediates the biosynthesis of the indole diterpenes nodulisporic acids (NA). Nodulisporic acid A (NAA) and its chemically modified derivatives are of particular significance because of their highly potent insecticidal activity against blood-feeding arthropods and lack of observable adverse effects on mammals, in particular the tremogenicity associated with the paspaline-derived IDTs is not observed. The geranylgeranyl diphosphate (GGPP) synthase ggs1, localized outside of the cluster, is proposed to catalyze the first step in nodulisporic acid biosynthesis via conversion of farnesyl pyrophosphate and isopentyl pyrophosphate into geranylgeranyl pyrophosphate (GGPP). Condensation of indole-3-glycerol phosphate with GGPP by the prenyl transferase nodC then forms 3-geranylgeranylindole (3-GGI). Epoxidation by the FAD-dependent monooxygenase nodM leads to a single-epoxidized-GGI that is substrate of the terpene cyclase nodB for cyclization to yield emindole SB. The terminal methyl carbon, C28, of emindole SB is then oxidized by the cytochrome P450 monooxygenase nodW to produce nodulisporic acid F (NAF), the pentacyclic core of NAA. NAF is converted to nodulisporic acid E (NAE) via prenylation. This step is probably performed by one of the indole diterpene prenyltransferases nodD1 or nodD2. Several oxidation steps performed by the FAD-linked oxidoreductase nodO and one of the cytochrome P450 monooxygenase nodR, nodX or nodZ further convert NAE to nodulisporic acid D (NAD). NAD is substrate of cytochrome P450 monooxygenase nodJ to produce the precursor of nodulisporic acid C (NAC), converted to NAC by one of the indole diterpene prenyltransferases nodD1 or nodD2. The FAD-dependent monooxygenase nodY2 then oxidizes NAC to nodulisporic acid B (NAB). Finally NAB is converted to NAA by one of the cytochrome P450 monooxygenases nodR, nodX or nodZ. The polypeptide is Prenyl transferase nodC (Hypoxylon pulicicidum).